The following is a 388-amino-acid chain: MKIHEYQAKEILRKFGVAVPRGYLAVTPLEAEGAARQLGGGISAVKAQIHAGGRGKGGGVKLARSPDEARQHAEAMLGMMLKTPQTGPDGQEVRKVYVEEGCRIARELYLGMTLDREIGRLAVMASVEGGVDIEEVAAKHPDKILREWISPLTGLMPFQARRLAFGLGLTGDSVTAFVRFATGLYNAYVATDASLAEINPLVITVGGEVLALDAKMNFDDNALYRHPDIAAMRDPDEEDPKETQAKEYDLSYIALDGDIGCMVNGAGLAMATMDVIKLSGGQPANFLDVGGGADEDKVTAAFKIILSDPHVKAVLVNIFGGIMKCDVIANGIVAAAKQVGLSIPLVVRLEGTNVELGKDILAHSELKIIPADDLGDAARKVVQAARAA.

The 236-residue stretch at 9–244 (KEILRKFGVA…PDEEDPKETQ (236 aa)) folds into the ATP-grasp domain. ATP is bound by residues Lys46, 53–55 (GRG), Glu99, Cys102, and Glu107. Mg(2+)-binding residues include Asn199 and Asp213. Substrate is bound by residues Asn264 and 321-323 (GIM).

This sequence belongs to the succinate/malate CoA ligase beta subunit family. As to quaternary structure, heterotetramer of two alpha and two beta subunits. It depends on Mg(2+) as a cofactor.

It catalyses the reaction succinate + ATP + CoA = succinyl-CoA + ADP + phosphate. The enzyme catalyses GTP + succinate + CoA = succinyl-CoA + GDP + phosphate. Its pathway is carbohydrate metabolism; tricarboxylic acid cycle; succinate from succinyl-CoA (ligase route): step 1/1. Succinyl-CoA synthetase functions in the citric acid cycle (TCA), coupling the hydrolysis of succinyl-CoA to the synthesis of either ATP or GTP and thus represents the only step of substrate-level phosphorylation in the TCA. The beta subunit provides nucleotide specificity of the enzyme and binds the substrate succinate, while the binding sites for coenzyme A and phosphate are found in the alpha subunit. The protein is Succinate--CoA ligase [ADP-forming] subunit beta of Anaeromyxobacter dehalogenans (strain 2CP-1 / ATCC BAA-258).